The following is a 274-amino-acid chain: Nitrogenase iron protein (274 aa).

An ATP-binding site is contributed by 8 to 15 (GKGGIGKS). A [4Fe-4S] cluster-binding site is contributed by Cys94. Arg97 bears the ADP-ribosylarginine; by dinitrogenase reductase ADP-ribosyltransferase mark. Residue Cys131 participates in [4Fe-4S] cluster binding.

The protein belongs to the NifH/BchL/ChlL family. As to quaternary structure, homodimer. The cofactor is [4Fe-4S] cluster. In terms of processing, the reversible ADP-ribosylation of Arg-97 inactivates the nitrogenase reductase and regulates nitrogenase activity.

The catalysed reaction is N2 + 8 reduced [2Fe-2S]-[ferredoxin] + 16 ATP + 16 H2O = H2 + 8 oxidized [2Fe-2S]-[ferredoxin] + 2 NH4(+) + 16 ADP + 16 phosphate + 6 H(+). The key enzymatic reactions in nitrogen fixation are catalyzed by the nitrogenase complex, which has 2 components: the iron protein and the molybdenum-iron protein. This Chlorobium phaeobacteroides (strain BS1) protein is Nitrogenase iron protein.